The sequence spans 328 residues: Phosphate acyltransferase (328 aa).

It belongs to the PlsX family. As to quaternary structure, homodimer. Probably interacts with PlsY.

It localises to the cytoplasm. It catalyses the reaction a fatty acyl-[ACP] + phosphate = an acyl phosphate + holo-[ACP]. Its pathway is lipid metabolism; phospholipid metabolism. In terms of biological role, catalyzes the reversible formation of acyl-phosphate (acyl-PO(4)) from acyl-[acyl-carrier-protein] (acyl-ACP). This enzyme utilizes acyl-ACP as fatty acyl donor, but not acyl-CoA. The protein is Phosphate acyltransferase of Campylobacter jejuni (strain RM1221).